Reading from the N-terminus, the 211-residue chain is Probable nicotinate-nucleotide adenylyltransferase (211 aa).

Belongs to the NadD family.

It carries out the reaction nicotinate beta-D-ribonucleotide + ATP + H(+) = deamido-NAD(+) + diphosphate. Its pathway is cofactor biosynthesis; NAD(+) biosynthesis; deamido-NAD(+) from nicotinate D-ribonucleotide: step 1/1. Functionally, catalyzes the reversible adenylation of nicotinate mononucleotide (NaMN) to nicotinic acid adenine dinucleotide (NaAD). In Legionella pneumophila (strain Lens), this protein is Probable nicotinate-nucleotide adenylyltransferase.